The primary structure comprises 197 residues: dITP/XTP pyrophosphatase (197 aa).

8–13 (TKNKGK) contacts substrate. 2 residues coordinate Mg(2+): E42 and D71. The active-site Proton acceptor is D71. Substrate contacts are provided by residues S72, 154–157 (FGYD), K177, and 182–183 (HR).

This sequence belongs to the HAM1 NTPase family. As to quaternary structure, homodimer. Requires Mg(2+) as cofactor.

It carries out the reaction XTP + H2O = XMP + diphosphate + H(+). The catalysed reaction is dITP + H2O = dIMP + diphosphate + H(+). It catalyses the reaction ITP + H2O = IMP + diphosphate + H(+). Functionally, pyrophosphatase that catalyzes the hydrolysis of nucleoside triphosphates to their monophosphate derivatives, with a high preference for the non-canonical purine nucleotides XTP (xanthosine triphosphate), dITP (deoxyinosine triphosphate) and ITP. Seems to function as a house-cleaning enzyme that removes non-canonical purine nucleotides from the nucleotide pool, thus preventing their incorporation into DNA/RNA and avoiding chromosomal lesions. The polypeptide is dITP/XTP pyrophosphatase (Oceanobacillus iheyensis (strain DSM 14371 / CIP 107618 / JCM 11309 / KCTC 3954 / HTE831)).